The primary structure comprises 543 residues: Formin-binding protein 1-like (543 aa).

The F-BAR domain occupies 1–263; the sequence is MSWGTELWDQ…AAKSVDERRD (263 aa). Coiled coils occupy residues 66-258 and 334-426; these read FTSC…AKSV and LEDF…QRSE. The REM-1 domain maps to 339–416; that stretch reads HLPPEQRRKR…IHKNEGWLSE (78 aa). The disordered stretch occupies residues 424-467; sequence RSERRHSAEANHLVAQGRESPEGSYTEDANQEGRVQPQHHAHPE. The SH3 domain maps to 479 to 540; that stretch reads PAIGHCKSLY…PTSYIEITLE (62 aa).

The protein belongs to the FNBP1 family. Homodimerizes, the dimers can polymerize end-to-end to form filamentous structures. Interacts with GTP-bound cdc42 and wasl/n-wasp.

It localises to the cytoplasm. It is found in the cytoskeleton. The protein localises to the cell cortex. The protein resides in the cytoplasmic vesicle. Its subcellular location is the cell membrane. Functionally, required to coordinate membrane tubulation with reorganization of the actin cytoskeleton during endocytosis. Essential for autophagy of intracellular bacterial pathogens. Promotes cdc42-induced actin polymerization by activating the wasl-waspip complex, the predominant form of wasl/n-wasp in cells. The protein is Formin-binding protein 1-like (fnbp1l) of Xenopus laevis (African clawed frog).